The following is a 348-amino-acid chain: Tetraacyldisaccharide 4'-kinase (348 aa).

50–57 lines the ATP pocket; sequence TMGGTGKT.

This sequence belongs to the LpxK family.

The catalysed reaction is a lipid A disaccharide + ATP = a lipid IVA + ADP + H(+). It functions in the pathway glycolipid biosynthesis; lipid IV(A) biosynthesis; lipid IV(A) from (3R)-3-hydroxytetradecanoyl-[acyl-carrier-protein] and UDP-N-acetyl-alpha-D-glucosamine: step 6/6. Its function is as follows. Transfers the gamma-phosphate of ATP to the 4'-position of a tetraacyldisaccharide 1-phosphate intermediate (termed DS-1-P) to form tetraacyldisaccharide 1,4'-bis-phosphate (lipid IVA). This chain is Tetraacyldisaccharide 4'-kinase, found in Desulfotalea psychrophila (strain LSv54 / DSM 12343).